Consider the following 861-residue polypeptide: 1,4-alpha-glucan-branching enzyme (861 aa).

The (1,4-alpha-D-glucosyl)n site is built by W173 and K208. The Nucleophile role is filled by D429. E484 (proton donor) is an active-site residue.

The protein belongs to the glycosyl hydrolase 13 family. GlgB subfamily. Monomer.

It localises to the plastid. The protein localises to the chloroplast. It is found in the amyloplast. It carries out the reaction Transfers a segment of a (1-&gt;4)-alpha-D-glucan chain to a primary hydroxy group in a similar glucan chain.. Its pathway is glycan biosynthesis; starch biosynthesis. Functionally, catalyzes the formation of the alpha-1,6-glucosidic linkages in starch by scission of a 1,4-alpha-linked oligosaccharide from growing alpha-1,4-glucan chains and the subsequent attachment of the oligosaccharide to the alpha-1,6 position. This is 1,4-alpha-glucan-branching enzyme (SBE1) from Solanum tuberosum (Potato).